Reading from the N-terminus, the 189-residue chain is Putative 3-methyladenine DNA glycosylase (189 aa).

Belongs to the DNA glycosylase MPG family.

The polypeptide is Putative 3-methyladenine DNA glycosylase (mag) (Corynebacterium glutamicum (strain ATCC 13032 / DSM 20300 / JCM 1318 / BCRC 11384 / CCUG 27702 / LMG 3730 / NBRC 12168 / NCIMB 10025 / NRRL B-2784 / 534)).